A 192-amino-acid chain; its full sequence is MYVVFEGIDCVGKSTQISLLKEIYKDAIFTLEPGGTELGKHLREILLNKTHPINKRAELLLFLADRAQHFEEILKTNQNKLIISDRSFISGMAYAKDFENDLLFALNSFALENFFPQKIIFLKGDANLIQERLSQKELDSIEKRGIEYFLSVQDKLEKVLHFLKEKISVEILTLDAKESKEKLHQQIKEFLQ.

7-14 (GIDCVGKS) contributes to the ATP binding site.

This sequence belongs to the thymidylate kinase family.

The enzyme catalyses dTMP + ATP = dTDP + ADP. Phosphorylation of dTMP to form dTDP in both de novo and salvage pathways of dTTP synthesis. This chain is Thymidylate kinase (tmk), found in Campylobacter jejuni subsp. jejuni serotype O:2 (strain ATCC 700819 / NCTC 11168).